The primary structure comprises 1256 residues: Pullulanase A (1256 aa).

Residues 1-44 (MRKTPSHTEKKMVYSIRSLKNGTGSVLIGASLVLLAMATPTISS) form the signal peptide. The disordered stretch occupies residues 42 to 117 (ISSDESTPTT…VTTETKAEEP (76 aa)). Residues 48–61 (TPTTNEPNNRNTTT) show a composition bias toward low complexity. Positions 79–90 (DISSPRNANASL) are enriched in polar residues. Residues 99–111 (TEPTTSTSPVTTE) show a composition bias toward low complexity. Substrate contacts are provided by residues 141–143 (WTW), Trp-153, Asp-199, 248–250 (WYW), Trp-261, Lys-303, and Asn-308. The Ca(2+) site is built by Ser-646 and Tyr-648. Substrate contacts are provided by residues 652-653 (YD) and Phe-728. Asp-763 (nucleophile) is an active-site residue. Glu-792 (proton donor) is an active-site residue. Trp-794 is a substrate binding site. Residues Met-813, Thr-816, and Asp-817 each coordinate Ca(2+). Asp-824, Arg-827, and Tyr-834 together coordinate substrate. Residues Asp-867 and Asp-871 each contribute to the Ca(2+) site. Substrate-binding positions include Asn-881, Lys-954, and 974–976 (DSY). Residue Asp-977 coordinates Ca(2+). The disordered stretch occupies residues 1126-1224 (SQNGTSHEST…TPDRQAELPN (99 aa)). Residues 1134-1172 (STAEEKPDSTPSKPEHQDPAPEARPDSTKPDAKVADAEN) are compositionally biased toward basic and acidic residues. The span at 1181 to 1194 (SQAEQPAQEAQASS) shows a compositional bias: low complexity. The span at 1200–1210 (QNESVENSSKK) shows a compositional bias: polar residues. The LPXTG sorting signal signature appears at 1222–1226 (LPNTG). Thr-1225 is subject to Pentaglycyl murein peptidoglycan amidated threonine. The propeptide at 1226–1256 (GIKNENKLLFAGISLLALLGLGFLLKNKKEN) is removed by sortase.

Belongs to the glycosyl hydrolase 13 family.

The protein localises to the secreted. Its subcellular location is the cell wall. The protein resides in the cell surface. It carries out the reaction Hydrolysis of (1-&gt;6)-alpha-D-glucosidic linkages in pullulan, amylopectin and glycogen, and in the alpha- and beta-limit dextrins of amylopectin and glycogen.. Inhibited by 4-O-alpha-D-glucopyranosylmoranoline (G1M). In terms of biological role, virulence factor. Involved in the degradation of glycogen of the mammalian host cells. Hydrolyzes the alpha-1,6-branchpoints of glycogen. Hydrolyzes pullulan. Does not hydrolyze dextran. Binds to mouse lung alveolar type II cells that are rich in glycogen stores. Is an alpha-glucan-specific carbohydrate-binding protein, which binds to amylose (pure alpha-(1,4)-linked glucose), amylopectin (alpha-(1,4)-linked glucose with alpha-(1,6) branch points), pullulan (linear polymer of mixed alpha-(1,4)- and alpha-(1,6)-linked glucose) and glycogen (similar to amylopectin with more frequent alpha-(1,6) branch points) in vitro. Does not bind to dextran (a linear polymer of alpha-(1,6)-linked glucose). The sequence is that of Pullulanase A from Streptococcus pneumoniae serotype 2 (strain D39 / NCTC 7466).